The sequence spans 399 residues: Argininosuccinate synthase (399 aa).

Residue 8-16 (AYSGGLDTS) participates in ATP binding. Tyr-87 serves as a coordination point for L-citrulline. Gly-117 is a binding site for ATP. L-aspartate-binding residues include Thr-119, Asn-123, and Asp-124. Asn-123 contributes to the L-citrulline binding site. L-citrulline contacts are provided by Arg-127, Ser-175, Glu-260, and Tyr-272.

The protein belongs to the argininosuccinate synthase family. Type 1 subfamily. In terms of assembly, homotetramer.

It is found in the cytoplasm. It catalyses the reaction L-citrulline + L-aspartate + ATP = 2-(N(omega)-L-arginino)succinate + AMP + diphosphate + H(+). Its pathway is amino-acid biosynthesis; L-arginine biosynthesis; L-arginine from L-ornithine and carbamoyl phosphate: step 2/3. The chain is Argininosuccinate synthase from Rhodococcus erythropolis (strain PR4 / NBRC 100887).